A 165-amino-acid polypeptide reads, in one-letter code: uncharacterized protein (165 aa).

The protein belongs to the IIV-6 415R family.

This is an uncharacterized protein from Invertebrate iridescent virus 3 (IIV-3).